A 529-amino-acid polypeptide reads, in one-letter code: MPRGPVAALLLLILHGAWSCLDLTCYTDYLWTITCVLETRSPNPSILSLTWQDEYEELQDQETFCSLHRSGHNTTHIWYTCHMRLSQFLSDEVFIVNVTDQSGNNSQECGSFVLAESIKPAPPLNVTVAFSGRYDISWDSAYDEPSNYVLRGKLQYELQYRNLRDPYAVRPVTKLISVDSRNVSLLPEEFHKDSSYQLQVRAAPQPGTSFRGTWSEWSDPVIFQTQAGEPEAGWDPHMLLLLAVLIIVLVFMGLKIHLPWRLWKKIWAPVPTPESFFQPLYREHSGNFKKWVNTPFTASSIELVPQSSTTTSALHLSLYPAKEKKFPGLPGLEEQLECDGMSEPGHWCIIPLAAGQAVSAYSEERDRPYGLVSIDTVTVGDAEGLCVWPCSCEDDGYPAMNLDAGRESGPNSEDLLLVTDPAFLSCGCVSGSGLRLGGSPGSLLDRLRLSFAKEGDWTADPTWRTGSPGGGSESEAGSPPGLDMDTFDSGFAGSDCGSPVETDEGPPRSYLRQWVVRTPPPVDSGAQSS.

The signal sequence occupies residues 1–19; the sequence is MPRGPVAALLLLILHGAWS. Intrachain disulfides connect Cys-20/Cys-109, Cys-25/Cys-35, and Cys-65/Cys-81. Residues 20 to 237 are Extracellular-facing; sequence CLDLTCYTDY…GEPEAGWDPH (218 aa). Fibronectin type-III domains follow at residues 21-118 and 119-228; these read LDLT…AESI and KPAP…TQAG. 5 N-linked (GlcNAc...) asparagine glycosylation sites follow: Asn-73, Asn-97, Asn-104, Asn-125, and Asn-182. Trp-214 is a glycosylation site (C-linked (Man) tryptophan). The WSXWS motif motif lies at 214 to 218; the sequence is WSEWS. Residues 238-258 form a helical membrane-spanning segment; that stretch reads MLLLLAVLIIVLVFMGLKIHL. The Cytoplasmic segment spans residues 259-529; that stretch reads PWRLWKKIWA…PPVDSGAQSS (271 aa). The Box 1 motif motif lies at 266–274; that stretch reads IWAPVPTPE. The disordered stretch occupies residues 458 to 529; sequence TADPTWRTGS…PPVDSGAQSS (72 aa).

Belongs to the type I cytokine receptor family. Type 4 subfamily. As to quaternary structure, heterodimer with the common gamma subunit. Associates with JAK1. In terms of processing, C-mannosylated at Trp-214 in the WSXWS motif, the sugar chain makes extensive hydrogen bonds with Asn-73 sugar, and bridges the two fibronectin domains transforming the V-shaped receptor into an A-frame. Selectively expressed in lymphoid tissues. Most highly expressed in thymus and spleen.

The protein resides in the membrane. In terms of biological role, this is a receptor for interleukin-21. This is Interleukin-21 receptor (Il21r) from Mus musculus (Mouse).